Here is a 169-residue protein sequence, read N- to C-terminus: Probable calcium-binding protein CML20 (169 aa).

The tract at residues 1 to 23 is disordered; sequence MSSIYRTVSRKEKPRRHHGLTTQ. 4 consecutive EF-hand domains span residues 23 to 58, 59 to 94, 96 to 131, and 132 to 167; these read QKKQEIKEAFELFDTDGSGTIDAKELNVAMRALGFE, MTEEQINKMIADVDKDGSGAIDFDEFVHMMTAKIGE, DTKEELTKAFQIIDLDKNGKISPDDIKRMAKDLGEN, and FTDAEIREMVEEADRDRDGEVNMDEFMRMMRRTAYG. 19 residues coordinate Ca(2+): Asp-36, Asp-38, Ser-40, Thr-42, Glu-47, Asp-72, Asp-74, Ser-76, Glu-83, Asp-109, Asp-111, Asn-113, Lys-115, Asp-120, Asp-145, Asp-147, Asp-149, Glu-151, and Glu-156.

As to quaternary structure, interacts with TON1A and TON1B. Interacts with SAC3A and SAC3B. Interacts with UCH1 and UCH2.

Functionally, potential calcium sensor. In Arabidopsis thaliana (Mouse-ear cress), this protein is Probable calcium-binding protein CML20.